The primary structure comprises 358 residues: Transcriptional repressor protein KorB (358 aa).

Positions 1–42 (MTAAQAKTTKKNTAAAAQEAAGAAQPSGLGLDSIGDLSSLLD) are enriched in low complexity. Disordered stretches follow at residues 1–79 (MTAA…FSPE) and 256–305 (DPNT…DKLK). Residues 275–285 (AGDGQDGEDGD) show a composition bias toward acidic residues. Positions 286-305 (QDGKDAKEKGAKEPDPDKLK) are enriched in basic and acidic residues.

Belongs to the ParB family.

Functionally, in conjunction with KorA, inhibits the transcription of the kilA, trfA and korAB operons. Is also involved in the negative control of the kilB operon. The protein is Transcriptional repressor protein KorB (korB) of Escherichia coli.